Here is a 529-residue protein sequence, read N- to C-terminus: DNA-binding protein (529 aa).

Basic and acidic residues predominate over residues 1-17 (MASREEEQRETTPERGR). 2 disordered regions span residues 1 to 107 (MASR…IVDS) and 125 to 166 (PVLI…AESE). A compositionally biased stretch (basic residues) spans 129 to 139 (KHGKGGKRTVR). The span at 155 to 165 (EEEEEPSEAES) shows a compositional bias: acidic residues. At Y195 the chain carries Phosphotyrosine; by host. Positions 284 and 286 each coordinate Zn(2+). The segment at 297–331 (IEMDVTSENGQRALKEQSSKAKIVKNRWGRNVVQI) is flexible loop. Zn(2+)-binding residues include C339, C355, C396, C398, C450, and C467. Residues 513–529 (VSLPVAHSDARQNPFDF) form a C-terminal arm, DBP binding region.

This sequence belongs to the adenoviridae E2A DNA-binding protein family. As to quaternary structure, homomultimerizes on viral ssDNA bound to pTP. Forms a initiation complex with viral polymerase, pTP and hosts NFIA and POU2F1/OCT1. Interacts with host SRCAP.

It is found in the host nucleus. Its function is as follows. Plays a role in the elongation phase of viral strand displacement replication by unwinding the template in an ATP-independent fashion, employing its capacity to form multimers. Also enhances the rate of initiation. Released from template upon second strand synthesis. Assembles in complex with viral pTP, viral pol, host NFIA and host POU2F1/OCT1 on viral origin of replication. Covers the whole ssDNA genome during synthesis. The complementary strand synthesis induces its relese from DNA template. May inhibit cellular transcription mediated by the interaction between host SRCAP and CBP. The protein is DNA-binding protein of Human adenovirus C serotype 5 (HAdV-5).